We begin with the raw amino-acid sequence, 920 residues long: Phosphoenolpyruvate carboxylase (920 aa).

Catalysis depends on residues H138 and K583.

This sequence belongs to the PEPCase type 1 family. Mg(2+) serves as cofactor.

It carries out the reaction oxaloacetate + phosphate = phosphoenolpyruvate + hydrogencarbonate. Functionally, forms oxaloacetate, a four-carbon dicarboxylic acid source for the tricarboxylic acid cycle. The sequence is that of Phosphoenolpyruvate carboxylase from Streptococcus pyogenes serotype M1.